Reading from the N-terminus, the 133-residue chain is Transcription antitermination protein NusB (133 aa).

The protein belongs to the NusB family.

Its function is as follows. Involved in transcription antitermination. Required for transcription of ribosomal RNA (rRNA) genes. Binds specifically to the boxA antiterminator sequence of the ribosomal RNA (rrn) operons. In Pediococcus pentosaceus (strain ATCC 25745 / CCUG 21536 / LMG 10740 / 183-1w), this protein is Transcription antitermination protein NusB.